The sequence spans 427 residues: cAMP-dependent protein kinase regulatory subunit (427 aa).

A dimerization and phosphorylation region spans residues 38–184 (QFCSNFFIRK…RIKVSISNNF (147 aa)). The disordered stretch occupies residues 96-145 (TTHMGHPNDHGALHDDDDDPLEDEDDEEFDKFSTEPLPSLPPTNYNRGRR). Residues 110 to 124 (DDDDDPLEDEDDEEF) show a composition bias toward acidic residues. Phosphoserine is present on Ser-147. 3',5'-cyclic AMP-binding positions include 185–300 (LFRN…FLSE), Glu-250, Arg-259, 303–422 (LLKS…YHAV), Glu-372, and Arg-381.

It belongs to the cAMP-dependent kinase regulatory chain family. Tetramer, composed of 2 regulatory (R) and 2 catalytic (C) subunits. In the presence of cAMP it dissociates into 2 active monomeric C subunits and an R dimer.

This chain is cAMP-dependent protein kinase regulatory subunit (pkar), found in Mucor circinelloides f. lusitanicus (Mucor racemosus var. lusitanicus).